The chain runs to 224 residues: Cytidylate kinase (224 aa).

Glycine 11–threonine 19 provides a ligand contact to ATP.

It belongs to the cytidylate kinase family. Type 1 subfamily.

The protein resides in the cytoplasm. It carries out the reaction CMP + ATP = CDP + ADP. The catalysed reaction is dCMP + ATP = dCDP + ADP. This Geobacillus kaustophilus (strain HTA426) protein is Cytidylate kinase.